Here is a 484-residue protein sequence, read N- to C-terminus: Membrane-bound lytic murein transglycosylase F (484 aa).

The N-terminal stretch at 1–18 (MKGLLLRIIAAFALVLWA) is a signal peptide. Positions 19-267 (IDMVFPWQQM…RIEEKYFNHF (249 aa)) are non-LT domain. Residues 268-484 (SQFDYVDMRQ…PLTDNQEKQE (217 aa)) form an LT domain region. Residue E312 is part of the active site. The segment at 459-484 (ADNKDKPSETDENLPLPLTDNQEKQE) is disordered.

This sequence in the N-terminal section; belongs to the bacterial solute-binding protein 3 family. The protein in the C-terminal section; belongs to the transglycosylase Slt family.

It is found in the cell outer membrane. It catalyses the reaction Exolytic cleavage of the (1-&gt;4)-beta-glycosidic linkage between N-acetylmuramic acid (MurNAc) and N-acetylglucosamine (GlcNAc) residues in peptidoglycan, from either the reducing or the non-reducing ends of the peptidoglycan chains, with concomitant formation of a 1,6-anhydrobond in the MurNAc residue.. Functionally, murein-degrading enzyme that degrades murein glycan strands and insoluble, high-molecular weight murein sacculi, with the concomitant formation of a 1,6-anhydromuramoyl product. Lytic transglycosylases (LTs) play an integral role in the metabolism of the peptidoglycan (PG) sacculus. Their lytic action creates space within the PG sacculus to allow for its expansion as well as for the insertion of various structures such as secretion systems and flagella. The sequence is that of Membrane-bound lytic murein transglycosylase F from Mannheimia succiniciproducens (strain KCTC 0769BP / MBEL55E).